A 631-amino-acid chain; its full sequence is Phosphomethylpyrimidine synthase (631 aa).

Residues Asn239, Met268, Tyr297, His333, 353 to 355 (SRG), 394 to 397 (DGLR), and Glu433 contribute to the substrate site. Residue His437 coordinates Zn(2+). Tyr460 lines the substrate pocket. Residue His501 coordinates Zn(2+). Positions 581, 584, and 589 each coordinate [4Fe-4S] cluster.

Belongs to the ThiC family. As to quaternary structure, homodimer. The cofactor is [4Fe-4S] cluster.

The catalysed reaction is 5-amino-1-(5-phospho-beta-D-ribosyl)imidazole + S-adenosyl-L-methionine = 4-amino-2-methyl-5-(phosphooxymethyl)pyrimidine + CO + 5'-deoxyadenosine + formate + L-methionine + 3 H(+). It functions in the pathway cofactor biosynthesis; thiamine diphosphate biosynthesis. Functionally, catalyzes the synthesis of the hydroxymethylpyrimidine phosphate (HMP-P) moiety of thiamine from aminoimidazole ribotide (AIR) in a radical S-adenosyl-L-methionine (SAM)-dependent reaction. The protein is Phosphomethylpyrimidine synthase of Salmonella paratyphi C (strain RKS4594).